Consider the following 332-residue polypeptide: Geranylgeranyl diphosphate synthase (332 aa).

Residues K45, R48, and H77 each contribute to the isopentenyl diphosphate site. Mg(2+)-binding residues include D84 and D88. Position 93 (R93) interacts with an all-trans-polyprenyl diphosphate. Isopentenyl diphosphate is bound at residue R94. The an all-trans-polyprenyl diphosphate site is built by K177, T178, Q215, K232, and K242.

Belongs to the FPP/GGPP synthase family. Mg(2+) serves as cofactor.

It catalyses the reaction isopentenyl diphosphate + (2E,6E)-farnesyl diphosphate = (2E,6E,10E)-geranylgeranyl diphosphate + diphosphate. The protein operates within isoprenoid biosynthesis; geranylgeranyl diphosphate biosynthesis; geranylgeranyl diphosphate from farnesyl diphosphate and isopentenyl diphosphate: step 1/1. Its function is as follows. Catalyzes the condensation of isopentenyl pyrophosphate with the allylic pyrophosphates to yield geranylgeranyl diphosphate (GGPP) which is a precursor of the ether-linked lipids. The sequence is that of Geranylgeranyl diphosphate synthase (gds) from Saccharolobus solfataricus (strain ATCC 35092 / DSM 1617 / JCM 11322 / P2) (Sulfolobus solfataricus).